The primary structure comprises 385 residues: 28S rRNA (uridine-N(3))-methyltransferase (385 aa).

Disordered stretches follow at residues 1-35 and 47-72; these read MAER…KKKW and QRAQ…NQGR. 2 stretches are compositionally biased toward basic and acidic residues: residues 15 to 35 and 47 to 58; these read HGQR…KKKW and QRAQEEEAKRQE. S-adenosyl-L-methionine-binding residues include arginine 293, glycine 313, asparagine 342, and threonine 343.

The protein belongs to the class IV-like SAM-binding methyltransferase superfamily. Interacts with INCA1.

The protein localises to the cytoplasm. It is found in the cytoskeleton. The protein resides in the spindle. It localises to the chromosome. Its subcellular location is the centromere. The protein localises to the kinetochore. It is found in the microtubule organizing center. The protein resides in the centrosome. It carries out the reaction uridine in 28S rRNA + S-adenosyl-L-methionine = N(3)-methyluridine in 28S rRNA + S-adenosyl-L-homocysteine + H(+). In terms of biological role, S-adenosyl-L-methionine-dependent methyltransferase that specifically methylates the N3 position of a uridine in 28S rRNA. Required for association of the centrosomes with the poles of the bipolar mitotic spindle during metaphase. Also involved in chromosome alignment. May promote centrosome maturation probably by recruiting A-kinase anchor protein AKAP9 to centrosomes in early mitosis. Binds specifically to miRNA MIR145 hairpin, regulates MIR145 expression at a postranscriptional level. The sequence is that of 28S rRNA (uridine-N(3))-methyltransferase from Mus musculus (Mouse).